The sequence spans 137 residues: Small ribosomal subunit protein uS19 (137 aa).

Belongs to the universal ribosomal protein uS19 family.

In terms of biological role, protein S19 forms a complex with S13 that binds strongly to the 16S ribosomal RNA. This chain is Small ribosomal subunit protein uS19, found in Methanoculleus marisnigri (strain ATCC 35101 / DSM 1498 / JR1).